The following is a 141-amino-acid chain: Protein MGF 100-2L (141 aa).

This sequence belongs to the asfivirus MGF 100 family.

Its function is as follows. Plays a role in virus cell tropism, and may be required for efficient virus replication in macrophages. The sequence is that of Protein MGF 100-2L from African swine fever virus (isolate Tick/Malawi/Lil 20-1/1983) (ASFV).